The chain runs to 149 residues: Large ribosomal subunit protein bL9 (149 aa).

Belongs to the bacterial ribosomal protein bL9 family.

Functionally, binds to the 23S rRNA. This chain is Large ribosomal subunit protein bL9, found in Acidothermus cellulolyticus (strain ATCC 43068 / DSM 8971 / 11B).